We begin with the raw amino-acid sequence, 304 residues long: Protein INO2 (304 aa).

The 55-residue stretch at 236–290 (VRKWKHVQMEKIRRINTKEAFERLIKSVRTPPKENGKRIPKHILLTCVMNDIKSI) folds into the bHLH domain.

In terms of assembly, efficient DNA binding requires dimerization with another bHLH protein.

The protein resides in the nucleus. Positive regulatory factor required for depression of the coregulated phospholipid biosynthetic enzymes. Also involved in the expression of ITR1. The polypeptide is Protein INO2 (INO2) (Saccharomyces cerevisiae (strain ATCC 204508 / S288c) (Baker's yeast)).